Here is a 265-residue protein sequence, read N- to C-terminus: Undecaprenyl-diphosphatase (265 aa).

The next 8 membrane-spanning stretches (helical) occupy residues Met-1–Ile-21, Gln-39–Leu-61, Leu-85–Glu-105, Leu-115–Gly-135, Ile-149–Ile-169, Phe-187–Leu-207, Ala-218–Phe-238, and Ile-244–Phe-264.

This sequence belongs to the UppP family.

It localises to the cell inner membrane. The catalysed reaction is di-trans,octa-cis-undecaprenyl diphosphate + H2O = di-trans,octa-cis-undecaprenyl phosphate + phosphate + H(+). Its function is as follows. Catalyzes the dephosphorylation of undecaprenyl diphosphate (UPP). Confers resistance to bacitracin. The protein is Undecaprenyl-diphosphatase of Nitrosococcus oceani (strain ATCC 19707 / BCRC 17464 / JCM 30415 / NCIMB 11848 / C-107).